A 162-amino-acid chain; its full sequence is uncharacterized protein (162 aa).

This is an uncharacterized protein from Acidianus sp. F28 (AFV-2).